The following is a 928-amino-acid chain: Isoleucine--tRNA ligase (928 aa).

A 'HIGH' region motif is present at residues 57-67 (PFANGNIHMGH). Residue Glu552 coordinates L-isoleucyl-5'-AMP. The 'KMSKS' region motif lies at 593 to 597 (KMSKS). Position 596 (Lys596) interacts with ATP. Residues Cys887, Cys890, Cys907, and Cys910 each contribute to the Zn(2+) site.

Belongs to the class-I aminoacyl-tRNA synthetase family. IleS type 1 subfamily. Monomer. The cofactor is Zn(2+).

It is found in the cytoplasm. It carries out the reaction tRNA(Ile) + L-isoleucine + ATP = L-isoleucyl-tRNA(Ile) + AMP + diphosphate. Its function is as follows. Catalyzes the attachment of isoleucine to tRNA(Ile). As IleRS can inadvertently accommodate and process structurally similar amino acids such as valine, to avoid such errors it has two additional distinct tRNA(Ile)-dependent editing activities. One activity is designated as 'pretransfer' editing and involves the hydrolysis of activated Val-AMP. The other activity is designated 'posttransfer' editing and involves deacylation of mischarged Val-tRNA(Ile). The protein is Isoleucine--tRNA ligase of Lacticaseibacillus casei (strain BL23) (Lactobacillus casei).